The sequence spans 584 residues: DNA mismatch repair protein MutL (584 aa).

The protein belongs to the DNA mismatch repair MutL/HexB family.

In terms of biological role, this protein is involved in the repair of mismatches in DNA. It is required for dam-dependent methyl-directed DNA mismatch repair. May act as a 'molecular matchmaker', a protein that promotes the formation of a stable complex between two or more DNA-binding proteins in an ATP-dependent manner without itself being part of a final effector complex. This Syntrophomonas wolfei subsp. wolfei (strain DSM 2245B / Goettingen) protein is DNA mismatch repair protein MutL.